The sequence spans 400 residues: Acyl-CoA dehydrogenase FadE26 (400 aa).

FAD-binding positions include 127–130 (IGYS), threonine 136, and serine 162. Glutamate 247 acts as the Proton acceptor in catalysis. Residue 380–382 (TNE) participates in FAD binding.

This sequence belongs to the acyl-CoA dehydrogenase family. As to quaternary structure, heterotetramer (dimer of heterodimers) composed of FadE26 and FadE27. FAD serves as cofactor.

The catalysed reaction is (25S)-3-oxocholest-4-en-26-oyl-CoA + A = 3-oxo-cholest-4,24-dien-26-oyl-CoA + AH2. It functions in the pathway steroid metabolism; cholesterol degradation. With respect to regulation, uncompetitively inhibited by high concentration of 3-OCS-CoA. Its function is as follows. Involved in the first cycle of side chain dehydrogenation in the beta-oxidation of cholesterol catabolism. It contributes partly to the virulence by increasing the efficiency of beta-oxidation. Catalyzes the dehydrogenation of acyl-CoA ester side chains of (25S)-3-oxo-cholest-4-en-26-oyl-CoA (3-OCS-CoA) to yield (24E)-3-oxo-cholest-4,24-dien-26-oyl-CoA. Also able to dehydrogenate steroyl-CoA such as 3-oxo-chol-4-en-24-oyl-CoA (3-OCO-CoA) as well as 3-oxo-4-pregnene-20-carboxyl-CoA (3-OPC-CoA). It dehydrogenates only (25S)-OCS-CoA diastereomer. The chain is Acyl-CoA dehydrogenase FadE26 (fadE26) from Mycobacterium tuberculosis (strain ATCC 25618 / H37Rv).